Consider the following 339-residue polypeptide: Methionine synthase (339 aa).

Zn(2+)-binding residues include His212, Cys214, and Cys295.

The protein belongs to the archaeal MetE family. Zn(2+) is required as a cofactor.

Its pathway is amino-acid biosynthesis; L-methionine biosynthesis via de novo pathway. In terms of biological role, catalyzes the transfer of a methyl group to L-homocysteine resulting in methionine formation. The physiological methyl donor is unknown. This chain is Methionine synthase, found in Sulfolobus acidocaldarius (strain ATCC 33909 / DSM 639 / JCM 8929 / NBRC 15157 / NCIMB 11770).